A 241-amino-acid chain; its full sequence is Lipoprotein-releasing system ATP-binding protein LolD 2 (241 aa).

The 236-residue stretch at 6 to 241 (LDAQQLSKSY…YKSYEKSTAV (236 aa)) folds into the ABC transporter domain. 43 to 50 (GASGSGKT) provides a ligand contact to ATP.

The protein belongs to the ABC transporter superfamily. Lipoprotein translocase (TC 3.A.1.125) family. The complex is composed of two ATP-binding proteins (LolD) and two transmembrane proteins (LolC and LolE).

Its subcellular location is the cell inner membrane. Functionally, part of the ABC transporter complex LolCDE involved in the translocation of mature outer membrane-directed lipoproteins, from the inner membrane to the periplasmic chaperone, LolA. Responsible for the formation of the LolA-lipoprotein complex in an ATP-dependent manner. This Chlorobium chlorochromatii (strain CaD3) protein is Lipoprotein-releasing system ATP-binding protein LolD 2.